Reading from the N-terminus, the 232-residue chain is Ribonuclease 3 (232 aa).

The RNase III domain maps to 5 to 134 (QTVLKNHFAI…FLGALLLDKD (130 aa)). Residue E47 coordinates Mg(2+). D51 is an active-site residue. Mg(2+) is bound by residues D120 and E123. Residue E123 is part of the active site. A DRBM domain is found at 160–229 (DYKTHLQELL…AKNAVEKGLD (70 aa)).

This sequence belongs to the ribonuclease III family. In terms of assembly, homodimer. Requires Mg(2+) as cofactor.

Its subcellular location is the cytoplasm. It catalyses the reaction Endonucleolytic cleavage to 5'-phosphomonoester.. Its function is as follows. Digests double-stranded RNA. Involved in the processing of primary rRNA transcript to yield the immediate precursors to the large and small rRNAs (23S and 16S). Processes some mRNAs, and tRNAs when they are encoded in the rRNA operon. Processes pre-crRNA and tracrRNA of type II CRISPR loci if present in the organism. This is Ribonuclease 3 from Streptococcus pneumoniae (strain Taiwan19F-14).